The sequence spans 475 residues: D-lactate dehydrogenase (475 aa).

The FAD-binding PCMH-type domain occupies 43 to 222 (YGKARPEVLV…TELTLKVIPA (180 aa)).

Belongs to the FAD-binding oxidoreductase/transferase type 4 family. FAD serves as cofactor. It depends on Zn(2+) as a cofactor.

It catalyses the reaction (R)-lactate + A = pyruvate + AH2. Catalyzes the dehydrogenation of (R)-lactate (D-lactate) to pyruvate. Active in vitro with the artificial electron acceptor 2,6-dichlorophenolindophenol (DCPIP), but not with NAD, NADP, or cytochrome c. Also displays a very low oxidase activity in vitro on D-lactate and L-lactate with O2 as the electron acceptor, but this activity is most likely not physiological. This chain is D-lactate dehydrogenase, found in Anaerostipes hadrus.